We begin with the raw amino-acid sequence, 407 residues long: 1-deoxy-D-xylulose 5-phosphate reductoisomerase (407 aa).

NADPH contacts are provided by threonine 25, glycine 26, serine 27, isoleucine 28, asparagine 53, and asparagine 136. Lysine 137 contacts 1-deoxy-D-xylulose 5-phosphate. NADPH is bound at residue glutamate 138. Aspartate 162 lines the Mn(2+) pocket. Positions 163, 164, 188, and 211 each coordinate 1-deoxy-D-xylulose 5-phosphate. Position 164 (glutamate 164) interacts with Mn(2+). Glycine 217 contributes to the NADPH binding site. Positions 224, 229, 230, and 233 each coordinate 1-deoxy-D-xylulose 5-phosphate. Glutamate 233 lines the Mn(2+) pocket.

Belongs to the DXR family. The cofactor is Mg(2+). Mn(2+) serves as cofactor.

The catalysed reaction is 2-C-methyl-D-erythritol 4-phosphate + NADP(+) = 1-deoxy-D-xylulose 5-phosphate + NADPH + H(+). It participates in isoprenoid biosynthesis; isopentenyl diphosphate biosynthesis via DXP pathway; isopentenyl diphosphate from 1-deoxy-D-xylulose 5-phosphate: step 1/6. In terms of biological role, catalyzes the NADPH-dependent rearrangement and reduction of 1-deoxy-D-xylulose-5-phosphate (DXP) to 2-C-methyl-D-erythritol 4-phosphate (MEP). This is 1-deoxy-D-xylulose 5-phosphate reductoisomerase from Rhodopseudomonas palustris (strain BisA53).